A 181-amino-acid polypeptide reads, in one-letter code: Large ribosomal subunit protein uL6 (181 aa).

The protein belongs to the universal ribosomal protein uL6 family. As to quaternary structure, part of the 50S ribosomal subunit.

In terms of biological role, this protein binds to the 23S rRNA, and is important in its secondary structure. It is located near the subunit interface in the base of the L7/L12 stalk, and near the tRNA binding site of the peptidyltransferase center. This is Large ribosomal subunit protein uL6 from Phytoplasma mali (strain AT).